The primary structure comprises 263 residues: TLC domain-containing protein 4 (263 aa).

The next 4 helical transmembrane spans lie at 7-27, 53-73, 90-110, and 124-144; these read LLIS…YFVS, VVST…FLFD, VNIA…ILYW, and ASLY…IGNF. The region spanning 44–246 is the TLC domain; sequence KKKIEWNSRV…ISKGCIKVIS (203 aa). Residue Lys-165 is modified to N6-acetyllysine. 2 helical membrane passes run 173-193 and 211-231; these read IVIN…ASML and LGVL…VMNV.

It belongs to the TLCD4 family.

It localises to the membrane. This is TLC domain-containing protein 4 from Homo sapiens (Human).